Consider the following 156-residue polypeptide: Small ribosomal subunit protein uS7 (156 aa).

It belongs to the universal ribosomal protein uS7 family. Part of the 30S ribosomal subunit. Contacts proteins S9 and S11.

In terms of biological role, one of the primary rRNA binding proteins, it binds directly to 16S rRNA where it nucleates assembly of the head domain of the 30S subunit. Is located at the subunit interface close to the decoding center, probably blocks exit of the E-site tRNA. The chain is Small ribosomal subunit protein uS7 from Syntrophobacter fumaroxidans (strain DSM 10017 / MPOB).